A 510-amino-acid polypeptide reads, in one-letter code: Inositol-3-phosphate synthase (510 aa).

NAD(+)-binding residues include glycine 70, glycine 71, asparagine 72, asparagine 73, aspartate 143, isoleucine 180, glutamine 190, arginine 193, threonine 230, alanine 231, asparagine 232, threonine 233, glycine 281, serine 282, aspartate 306, serine 309, asparagine 340, asparagine 341, aspartate 342, lysine 355, glycine 393, aspartate 394, aspartate 422, and serine 423.

The protein belongs to the myo-inositol 1-phosphate synthase family. Requires NAD(+) as cofactor.

It is found in the cytoplasm. The protein localises to the cytosol. Its subcellular location is the nucleus. It catalyses the reaction D-glucose 6-phosphate = 1D-myo-inositol 3-phosphate. Its pathway is polyol metabolism; myo-inositol biosynthesis; myo-inositol from D-glucose 6-phosphate: step 1/2. In terms of biological role, key enzyme in myo-inositol biosynthesis pathway that catalyzes the conversion of glucose 6-phosphate to 1-myo-inositol 1-phosphate in a NAD-dependent manner. In Sesamum indicum (Oriental sesame), this protein is Inositol-3-phosphate synthase.